A 177-amino-acid polypeptide reads, in one-letter code: Isopentenyl-diphosphate Delta-isomerase (177 aa).

H22 and H28 together coordinate Mn(2+). The region spanning 26 to 160 (LRHMAISVFV…PERFTPWLRI (135 aa)) is the Nudix hydrolase domain. The active site involves C62. H64 serves as a coordination point for Mn(2+). E82 serves as a coordination point for Mg(2+). Mn(2+) is bound by residues E108 and E110. E110 is a catalytic residue.

This sequence belongs to the IPP isomerase type 1 family. The cofactor is Mg(2+). Requires Mn(2+) as cofactor.

It is found in the cytoplasm. The catalysed reaction is isopentenyl diphosphate = dimethylallyl diphosphate. It participates in isoprenoid biosynthesis; dimethylallyl diphosphate biosynthesis; dimethylallyl diphosphate from isopentenyl diphosphate: step 1/1. It functions in the pathway porphyrin-containing compound metabolism; chlorophyll biosynthesis. In terms of biological role, catalyzes the 1,3-allylic rearrangement of the homoallylic substrate isopentenyl (IPP) to its highly electrophilic allylic isomer, dimethylallyl diphosphate (DMAPP). The protein is Isopentenyl-diphosphate Delta-isomerase of Cereibacter sphaeroides (strain ATCC 17029 / ATH 2.4.9) (Rhodobacter sphaeroides).